Here is a 332-residue protein sequence, read N- to C-terminus: Cysteine and histidine-rich domain-containing protein 1 (332 aa).

Residue A2 is modified to N-acetylalanine. Residues 2–77 (ALLCYNRGCG…KPPESVKPEV (76 aa)) form an interaction with PPP5C region. Residues C5, C10, C24, H27, C42, and C43 each coordinate Zn(2+). 2 CHORD domains span residues 5–64 (CYNR…KGRH) and 157–216 (CKNG…KGKH). Residue T47 is modified to Phosphothreonine. Position 51 is a phosphoserine (S51). Zn(2+)-binding residues include C59, H64, C157, C162, C176, H179, C194, C195, C211, and H216. Residues 62–81 (GRHNSEKPPESVKPEVKTTE) form a disordered region. Residues 64–81 (HNSEKPPESVKPEVKTTE) show a composition bias toward basic and acidic residues. The tract at residues 65-316 (NSEKPPESVK…AEPMQWASLE (252 aa)) is interaction with HSP90AA1 and HSP90AB1. Positions 227-316 (VVPCRHDWHQ…AEPMQWASLE (90 aa)) constitute a CS domain.

In terms of assembly, interacts with HSP90AA1, HSP90AB1, PPP5C, ROCK1 and ROCK2.

Regulates centrosome duplication, probably by inhibiting the kinase activity of ROCK2. Proposed to act as co-chaperone for HSP90. May play a role in the regulation of NOD1 via a HSP90 chaperone complex. In vitro, has intrinsic chaperone activity. This function may be achieved by inhibiting association of ROCK2 with NPM1. Plays a role in ensuring the localization of the tyrosine kinase receptor EGFR to the plasma membrane, and thus ensures the subsequent regulation of EGFR activity and EGF-induced actin cytoskeleton remodeling. Involved in stress response. Prevents tumorigenesis. This Pongo abelii (Sumatran orangutan) protein is Cysteine and histidine-rich domain-containing protein 1 (CHORDC1).